The following is a 234-amino-acid chain: SPX domain-containing protein 6 (234 aa).

The 137-residue stretch at Met1–Glu137 folds into the SPX domain. Residues Gly202–Gln234 form a disordered region.

Predominantly expressed in roots and leaves.

Its function is as follows. May be involved in maintaining cellular Pi homeostasis when plants are exposed to an external change in Pi. This chain is SPX domain-containing protein 6, found in Oryza sativa subsp. japonica (Rice).